A 354-amino-acid polypeptide reads, in one-letter code: N-acylethanolamine-hydrolyzing acid amidase (354 aa).

The first 22 residues, 1-22, serve as a signal peptide directing secretion; that stretch reads MRSPGIVLLLLLLLLLPPGAAP. N-linked (GlcNAc...) asparagine glycans are attached at residues asparagine 35 and asparagine 104. Cysteine 123 functions as the Nucleophile in the catalytic mechanism. N-linked (GlcNAc...) asparagine glycans are attached at residues asparagine 306, asparagine 312, and asparagine 352.

This sequence belongs to the acid ceramidase family. In terms of assembly, heterodimer of an alpha and a beta subunit, produced by autocatalytic cleavage. Post-translationally, N-glycosylated. Tunicamycin treatment causes a reduction in specific activity against N-palmitoylethanolamine. In terms of processing, autoproteolytic cleavage at pH 4.5 gives rise to the alpha and beta subunit. Cleavage gives rise to a conformation change that activates the enzyme. The same catalytic Cys residue mediates the autoproteolytic cleavage and subsequent hydrolysis of lipid substrates.

Its subcellular location is the lysosome. The protein resides in the membrane. The catalysed reaction is N-hexadecanoylethanolamine + H2O = ethanolamine + hexadecanoate. It catalyses the reaction an N-(long-chain fatty acyl)ethanolamine + H2O = a long-chain fatty acid + ethanolamine. It carries out the reaction N-dodecanoylethanolamine + H2O = dodecanoate + ethanolamine. The enzyme catalyses N-tetradecanoylethanolamine + H2O = tetradecanoate + ethanolamine. The catalysed reaction is an N-acylsphing-4-enine + H2O = sphing-4-enine + a fatty acid. It catalyses the reaction N-hexadecanoylsphing-4-enine + H2O = sphing-4-enine + hexadecanoate. It carries out the reaction N-dodecanoylsphing-4-enine + H2O = dodecanoate + sphing-4-enine. It functions in the pathway lipid metabolism; fatty acid metabolism. Its function is as follows. Degrades bioactive fatty acid amides to their corresponding acids, with the following preference: N-palmitoylethanolamine &gt; N-myristoylethanolamine &gt; N-stearoylethanolamine &gt; N-oleoylethanolamine &gt; N-linoleoylethanolamine &gt; N-arachidonoylethanolamine. The sequence is that of N-acylethanolamine-hydrolyzing acid amidase from Cavia porcellus (Guinea pig).